The primary structure comprises 467 residues: MNKGRILSQLPSVDELIKNLEHDKLEKMIPRSVVVEQTRITVDTYRKAILTMDEGSLRDYQIDITSMHDEIKQACESFCSMNLREVINGTGVILHTNLGRSLLSEEIKGQIWEVASGYSTLEIDVTTGKRGSRYNHVVDVLKHLTGAEDALVVNNNAAAVMLVLGTIAKGKEVIVSRGELVEIGGSFRVPDVMEQSGGKLREVGTTNKTHLWDYEGAISDETAALLKVHTSNYRIMGFTESVGLEEIVELGNRYHIPTIEDIGSGVLIDLQKYGLAHEPTVQESVKAGVDIVTFSGDKLLGGPQAGIIVGKRKWIEKMKKNPLTRAIRVDKLTMAALEATLKLYLDEDTAIKHIPTLKMLTENLDTISERASDLFRKLQALDEHLLVRIEEDFSQVGGGSMPLEKLPTKVITLEHTILSAAQMETKLRNFKRPIFTRIRDEKVMMDLRTIREKDFVFIVEALKTVAK.

Residue Lys298 is modified to N6-(pyridoxal phosphate)lysine.

This sequence belongs to the SelA family. The cofactor is pyridoxal 5'-phosphate.

It localises to the cytoplasm. The catalysed reaction is L-seryl-tRNA(Sec) + selenophosphate + H(+) = L-selenocysteinyl-tRNA(Sec) + phosphate. It participates in aminoacyl-tRNA biosynthesis; selenocysteinyl-tRNA(Sec) biosynthesis; selenocysteinyl-tRNA(Sec) from L-seryl-tRNA(Sec) (bacterial route): step 1/1. Its function is as follows. Converts seryl-tRNA(Sec) to selenocysteinyl-tRNA(Sec) required for selenoprotein biosynthesis. This Alkaliphilus metalliredigens (strain QYMF) protein is L-seryl-tRNA(Sec) selenium transferase.